A 246-amino-acid chain; its full sequence is ATP synthase subunit a, chloroplastic (246 aa).

The next 5 helical transmembrane spans lie at 33-53 (VHGQVLLVSWFVLAVIIGFGL), 99-119 (TIFLFVFVSNWSGALVPWALI), 133-153 (INTTVALALLTSIAYFYAGIN), 201-221 (GVLVALVPLVIPIPLMLLGLF), and 222-242 (TSAIQALVFSTLAGAYIGESL).

This sequence belongs to the ATPase A chain family. As to quaternary structure, F-type ATPases have 2 components, CF(1) - the catalytic core - and CF(0) - the membrane proton channel. CF(1) has five subunits: alpha(3), beta(3), gamma(1), delta(1), epsilon(1). CF(0) has four main subunits: a, b, b' and c.

The protein localises to the plastid. The protein resides in the chloroplast thylakoid membrane. Its function is as follows. Key component of the proton channel; it plays a direct role in the translocation of protons across the membrane. The polypeptide is ATP synthase subunit a, chloroplastic (Oltmannsiellopsis viridis (Marine flagellate)).